A 1474-amino-acid polypeptide reads, in one-letter code: SH3 and multiple ankyrin repeat domains protein 2 (1474 aa).

The segment covering 66–76 (LSPQLLQQTPS) has biased composition (polar residues). The tract at residues 66 to 125 (LSPQLLQQTPSKPDGATKSLGSYAPGPRSRSPSLNRLGGAGEDGKRPQPPHWHVGSPFTP) is disordered. One can recognise an SH3 domain in the interval 148–207 (VPGRLFVAIKPYQPQVDGEIPLHRGDRVKVLSIGEGGFWEGSARGHIGWFPAECVEEVQC). Phosphoserine is present on Q162. In terms of domain architecture, PDZ spans 248 to 342 (TVVLQKKDNE…HLVLKVVTVT (95 aa)). S373 carries the post-translational modification Phosphoserine. Residues 392-413 (RKKKDKPEEIVPASKPSRTAEN) form a disordered region. S457 carries the post-translational modification Phosphoserine. At T486 the chain carries Phosphothreonine. The interval 504–534 (LSMPDTSEDIPPPPQSVPPSPPPPSPTTYNC) is disordered. A compositionally biased stretch (pro residues) spans 513–529 (IPPPPQSVPPSPPPPSP). Position 586 is a phosphoserine (S586). Disordered stretches follow at residues 659–920 (TIIV…ADDK), 947–995 (PVAG…PAAA), and 1057–1153 (PALA…ESMD). A compositionally biased stretch (low complexity) spans 666–678 (STSSSGKSSQGSS). Residues 711-722 (VRDREKRLEARR) show a composition bias toward basic and acidic residues. A Phosphoserine modification is found at S724. Residues 783-795 (LGGGEAGAQGEAG) show a composition bias toward gly residues. Composition is skewed to low complexity over residues 811 to 823 (PAAA…PASP) and 833 to 846 (RLLD…LALS). 2 stretches are compositionally biased toward basic and acidic residues: residues 847-868 (ARDR…KADL) and 899-920 (RRQE…ADDK). Residue T903 is modified to Phosphothreonine. Over residues 1075 to 1085 (SLNSSQPANST) the composition is skewed to polar residues. The span at 1119–1130 (VDSRSSSDHHLE) shows a compositional bias: basic and acidic residues. Over residues 1131 to 1151 (TTSTISTVSSISTLSSEGGES) the composition is skewed to low complexity. Residues 1169–1175 (PPVPPKP) carry the SH3-binding motif. Disordered stretches follow at residues 1195 to 1216 (EDTD…SAQA) and 1260 to 1401 (NRGK…ISNK). The span at 1202–1212 (IPPPAPPPPPG) shows a compositional bias: pro residues. Residues 1291 to 1305 (STVSGTRSTTVTFTV) are compositionally biased toward low complexity. Residue T1292 is glycosylated (O-linked (GlcNAc) threonine). Over residues 1307–1317 (PGTSQPITLQS) the composition is skewed to polar residues. A phosphoserine mark is found at S1334 and S1338. 2 stretches are compositionally biased toward low complexity: residues 1352 to 1363 (SAAAASPSPTLS) and 1385 to 1399 (RSRS…QPIS). The region spanning 1411–1474 (WTKPDVADWL…ERALKQLLDR (64 aa)) is the SAM domain.

The protein belongs to the SHANK family. As to quaternary structure, is part of a complex with DLG4/PSD-95 and DLGAP1/GKAP. Interacts with CTTN/cortactin SH3 domain, DLGAP1/GKAP and alpha-latrotoxin receptor 1. Interacts with DNM2, DBNL, GRID2, BAIAP2, SLC9A3, PLCB3 and CFTR. Interacts with ABI1 (via SH3 domain). Interacts (via proline-rich region) with PDE4D isoform 5 (via N-terminal region). Interacts with PDE4D isoform 33, isoform 4, isoform 7, isoform 8 and isoform 9 but not isoform 32 and isoform 6. Interacts weakly with PDE4D isoform 31. Interacts with ABI1. Expressed in epithelial cells (at protein level). All isoforms except isoform 7 are expressed predominantly in brain, with highest levels in olfactory bulb, cerebral cortex, cerebellum, central gray matter and hippocampus. Moderate levels of expression are seen in the caudate putamen, thalamic nuclei and brain stem. In cerebellum primarily expressed in Purkinje cells. Isoform 7 is not expressed in brain but expressed in liver, cholangiocytes and thymus. Isoform 7 is present in pancreas, colonic mucosa and thymocytes (at protein level).

The protein localises to the apical cell membrane. It is found in the cytoplasm. The protein resides in the synapse. It localises to the postsynaptic density. Its subcellular location is the cell projection. The protein localises to the growth cone. It is found in the dendritic spine. Functionally, seems to be an adapter protein in the postsynaptic density (PSD) of excitatory synapses that interconnects receptors of the postsynaptic membrane including NMDA-type and metabotropic glutamate receptors, and the actin-based cytoskeleton. May play a role in the structural and functional organization of the dendritic spine and synaptic junction. This chain is SH3 and multiple ankyrin repeat domains protein 2 (Shank2), found in Rattus norvegicus (Rat).